The sequence spans 457 residues: UDP-glycosyltransferase 708C2 (457 aa).

The active-site Proton acceptor is the H32. Position 32 (H32) interacts with an anthocyanidin. The active-site Charge relay is the D129. T150 serves as a coordination point for UDP-alpha-D-glucose. Residues 279 to 280 (NR) form a UDP region. UDP-alpha-D-glucose is bound by residues V341, Q343, H358, W361, N362, S363, and E366. Residue G381 coordinates an anthocyanidin. Positions 382 and 383 each coordinate UDP-alpha-D-glucose.

The protein belongs to the UDP-glycosyltransferase family. Expressed in cotyledons. Not detected in flowers, leaves, roots and hypocotyls.

It catalyses the reaction a 3'-hydro-2'-hydroxy-beta-oxodihydrochalcone + UDP-alpha-D-glucose = a 3'-(beta-D-glucopyranosyl)-2'-hydroxy-beta-oxodihydrochalcone + UDP + H(+). UDP-glucose-dependent glucosyltransferase catalyzing the c-glucosylation of 2-hydroxyflavanones (2-hydroxynaringenin, 2-hydroxyeriodictyol and 2-hydroxypinocembrin) and phloretin. No activity with flavanones, flavones or flavonols. The polypeptide is UDP-glycosyltransferase 708C2 (Fagopyrum esculentum (Common buckwheat)).